The primary structure comprises 181 residues: Oligoribonuclease (181 aa).

The Exonuclease domain maps to 8-171 (LIWIDLEMTG…LDIQESIAEL (164 aa)). Y129 is a catalytic residue.

The protein belongs to the oligoribonuclease family.

It localises to the cytoplasm. Functionally, 3'-to-5' exoribonuclease specific for small oligoribonucleotides. The protein is Oligoribonuclease of Shewanella amazonensis (strain ATCC BAA-1098 / SB2B).